The primary structure comprises 817 residues: MSVILDDDVLLILTLDEELSAPLTPSNGLGQEDLPSKNGGGQSGPNSQVPSLVSGADSPPSSPPGHNWEMNYQEAAIYLQEGQNNDKFFTHPKDARALAAYLFVHNHFFYMMELLTALLLLLLSLCESPAVPALKLRTYVHATLELFALMVVVFELCMKLRWLGFHTFVRHKRTMVKTSVLVVQFIEAIVVLVRQTSHVRVTRALRCIFLVDCRYCGGVRRNLRQIFQSLPPFMDILLLLLFFMIIFAILGFYLFSTNPSDPYFNTLENSIVNLFVLLTTANFPDVMMPSYSRNPWSCVFFIVYLSIELYFIMNLLLAVVFDTFNDIEKHKFKSLLLHKRTAIQHAYHLLVSQRRPAGISYRQFEGLMRFYKPRMSARERFLTFKALNQSNTPLLSLKDFYDIYEVAALQWKAKKNRQHWFDELPRTAFLIFKGINILVNSKAFQYFMYLVVAVNGVWILVETFMLKGGNFISKHVPWSYLVFLTIYGVELFMKVAGLGPVEYLSSGWNLFDFSVTAFAFLGLLALTLNMEPFYFIVVLRPLQLLRLFKLKKRYRNVLDTMFELLPRMASLGLTLLTFYYSFAIVGMEFFSGRLSPNCCNSSTVADAYRFINHTVGNKTKVEEGYYYLNNFDNILNSFVTLFELTVVNNWYIIMEGVTSQTSHWSRLYFMTFYIVTMVVMTIIVAFILEAFVFRMNYSRKSQESEVDSGIVIEKEMSKEELLAILELHREARGTSSDVTRLLDTLSQMEKYQQNSMVFLGRRSRTKSDLSLKMYQEEIQEWYEEHAREQEQQQLRGSAPSPAAQQTPGSRQRSQTVT.

Over 1–101 (MSVILDDDVL…PKDARALAAY (101 aa)) the chain is Cytoplasmic. A disordered region spans residues 22-66 (PLTPSNGLGQEDLPSKNGGGQSGPNSQVPSLVSGADSPPSSPPGH). A helical transmembrane segment spans residues 102–122 (LFVHNHFFYMMELLTALLLLL). Residues 123-137 (LSLCESPAVPALKLR) lie on the Extracellular side of the membrane. Residues 138-158 (TYVHATLELFALMVVVFELCM) traverse the membrane as a helical segment. Residues 159–172 (KLRWLGFHTFVRHK) are Cytoplasmic-facing. Residues 173–193 (RTMVKTSVLVVQFIEAIVVLV) form a helical membrane-spanning segment. The Extracellular portion of the chain corresponds to 194–202 (RQTSHVRVT). Residues 203 to 221 (RALRCIFLVDCRYCGGVRR) traverse the membrane as a helical segment. At 222–235 (NLRQIFQSLPPFMD) the chain is on the cytoplasmic side. Residues 236–256 (ILLLLLFFMIIFAILGFYLFS) form a helical membrane-spanning segment. Residues 257 to 263 (TNPSDPY) lie on the Extracellular side of the membrane. The helical; Pore-forming intramembrane region spans 264–287 (FNTLENSIVNLFVLLTTANFPDVM). The Extracellular segment spans residues 288-298 (MPSYSRNPWSC). Residues 299 to 319 (VFFIVYLSIELYFIMNLLLAV) traverse the membrane as a helical segment. Topologically, residues 320–445 (VFDTFNDIEK…NILVNSKAFQ (126 aa)) are cytoplasmic. Residues 446–466 (YFMYLVVAVNGVWILVETFML) traverse the membrane as a helical segment. Residues 467-480 (KGGNFISKHVPWSY) are Extracellular-facing. The helical transmembrane segment at 481–501 (LVFLTIYGVELFMKVAGLGPV) threads the bilayer. At 502–504 (EYL) the chain is on the cytoplasmic side. The helical transmembrane segment at 505-527 (SSGWNLFDFSVTAFAFLGLLALT) threads the bilayer. The Extracellular portion of the chain corresponds to 528 to 535 (LNMEPFYF). Residues 536–550 (IVVLRPLQLLRLFKL) form a helical membrane-spanning segment. Over 551 to 574 (KKRYRNVLDTMFELLPRMASLGLT) the chain is Cytoplasmic. Residues 575-595 (LLTFYYSFAIVGMEFFSGRLS) traverse the membrane as a helical segment. The Extracellular segment spans residues 596-630 (PNCCNSSTVADAYRFINHTVGNKTKVEEGYYYLNN). Residues 631–654 (FDNILNSFVTLFELTVVNNWYIIM) constitute an intramembrane region (helical; Pore-forming). Over 655–671 (EGVTSQTSHWSRLYFMT) the chain is Extracellular. The chain crosses the membrane as a helical span at residues 672–692 (FYIVTMVVMTIIVAFILEAFV). Residues 693 to 817 (FRMNYSRKSQ…GSRQRSQTVT (125 aa)) are Cytoplasmic-facing. Residues 770-794 (SLKMYQEEIQEWYEEHAREQEQQQL) adopt a coiled-coil conformation. The segment at 785-817 (HAREQEQQQLRGSAPSPAAQQTPGSRQRSQTVT) is disordered. Residues 802–817 (AAQQTPGSRQRSQTVT) show a composition bias toward polar residues.

The protein belongs to the calcium channel alpha-1 subunit (TC 1.A.1.11) family. Two pore calcium channel subfamily. Dimer. Interacts with MTOR; the interaction is required for TPCN1 ATP sensitivity. Interacts with STX7, STX8 and STX12. Interacts with JPT2. Found in a complex with LSM12, TPCN1 and TPCN2. Post-translationally, N-glycosylated. Widely expressed. Expressed at relatively high level in kidney, liver and lung, and in the kidney it is expressed at inner medullary collecting ducts.

The protein localises to the lysosome membrane. Its subcellular location is the endosome membrane. It is found in the early endosome membrane. The protein resides in the recycling endosome membrane. It carries out the reaction Na(+)(in) = Na(+)(out). The catalysed reaction is Ca(2+)(in) = Ca(2+)(out). Na(+) current is inhibited by ATP in a MTORC-dependent manner. ATP sensitivity is independent of PI(3,5)P2. Probably regulated by Mg(2+) ions, cytosolic Mg(2+) selectively inhibits outward current while lysosomal Mg(2+) modestly inhibits both the outward and inward currents. In the absence of Mg(2+), NAADP readily activates TPCN2, with properties similar to PI(3,5)P2. Both current elicited by PI(3,5)P2 as well as NAADP are inhibited by tetrandrine. Functionally, intracellular channel initially characterized as a non-selective Ca(2+)-permeable channel activated by NAADP (nicotinic acid adenine dinucleotide phosphate), it is also a voltage-gated highly-selective Na(+) channel activated directly by PI(3,5)P2 (phosphatidylinositol 3,5-bisphosphate) that senses pH changes and confers electrical excitability to organelles. Localizes to the early and recycling endosomes membranes where it plays a role in the uptake and processing of proteins and regulates organellar membrane excitability, membrane trafficking and pH homeostasis. Ion selectivity is not fixed but rather agonist-dependent and under defined ionic conditions, can be readily activated by both NAADP and PI(3,5)P2. Required for mTOR-dependent nutrient sensing. In Rattus norvegicus (Rat), this protein is Two pore calcium channel protein 1 (Tpcn1).